The primary structure comprises 235 residues: Aspartate/glutamate leucyltransferase (235 aa).

This sequence belongs to the R-transferase family. Bpt subfamily.

It localises to the cytoplasm. The enzyme catalyses N-terminal L-glutamyl-[protein] + L-leucyl-tRNA(Leu) = N-terminal L-leucyl-L-glutamyl-[protein] + tRNA(Leu) + H(+). It carries out the reaction N-terminal L-aspartyl-[protein] + L-leucyl-tRNA(Leu) = N-terminal L-leucyl-L-aspartyl-[protein] + tRNA(Leu) + H(+). Its function is as follows. Functions in the N-end rule pathway of protein degradation where it conjugates Leu from its aminoacyl-tRNA to the N-termini of proteins containing an N-terminal aspartate or glutamate. This chain is Aspartate/glutamate leucyltransferase, found in Shewanella putrefaciens (strain CN-32 / ATCC BAA-453).